We begin with the raw amino-acid sequence, 909 residues long: MGVFESIFGSANKKELKKIEPIIKKIESYDKSMQQLSDDELKHKTVEFKERLKNGETLDDILPEAFAVVREASYRVLGMKQYRVQLIGGVVLHQGRIAEMKTGEGKTLVATLPAYLNALSGKGVHVVTVNDYLAKRDKEWMGKVHEFLGLTVGVIVYGLDNDERRENYACDITYGTNNQYGFDYLRDNMVIYKKDKVQRGLNFAIVDEVDSILIDEARTPLIISGQGDESTDMYMRANMFANGLTGRIMDPEEDKPDIFDREFKDETVDFLVDEKRKTASLTEVGTRKAEEYFGVENLSDPNNMELAHHINQALKANNTMKRDIDYVVKDDEILIVDEFTGRIMEGRRYSDGLHQAIEAKEGVEVKSESKTLATVTFQNYFRMYNKLSGMTGTAKTEEAEFNEIYKMDVVEIPTNKPVARVDEQDRVYINENAKFNAIVEEIKEIHKTGQPILVGTISIEVSERLSNLLKKNGIKHDVLNAKQHEREAEIVAQAGMFDKVTIATNMAGRGTDILLGGNPDFMAKHDMKKQGYGDYVIESLDSFLPSTDEELVAARNVYNELHKKYKKMTDENKKKVLEVGGLYIIGTERHESRRIDNQLRGRSGRQGDPGRSRFFVSLGDNLMRLFGGETIQKYAESGKFPEDEPMEFRTITKAIERAQTKVESNNFGIRKNVLKYDDVMNAQRKVIYTERDKVLDGEDMHESIVAMIKDIISNAIDTYCQDPKSENWEMEALMTYLNTFIPEGTLDLTRLNSYNKKTFTDYVIQKALEVYNAKEEAIGKEKFREIERVILLMVVDRKWMDHIDAMDQLRQGIGLRAFGQQDPVRAYNNEGFEMFEDMNHSIKEDTVRGMFNVQPVEEIERKQVAHETSATGGEEEINKPVVKGKKIGRNDPCPCGSGKKYKNCCGKNR.

Residues Gln-85, 103–107 (GEGKT), and Asp-512 contribute to the ATP site. The tract at residues 866–899 (HETSATGGEEEINKPVVKGKKIGRNDPCPCGSGK) is disordered. The Zn(2+) site is built by Cys-893, Cys-895, Cys-904, and Cys-905.

Belongs to the SecA family. Monomer and homodimer. Part of the essential Sec protein translocation apparatus which comprises SecA, SecYEG and auxiliary proteins SecDF. Other proteins may also be involved. It depends on Zn(2+) as a cofactor.

It is found in the cell membrane. The protein localises to the cytoplasm. The enzyme catalyses ATP + H2O + cellular proteinSide 1 = ADP + phosphate + cellular proteinSide 2.. Its function is as follows. Part of the Sec protein translocase complex. Interacts with the SecYEG preprotein conducting channel. Has a central role in coupling the hydrolysis of ATP to the transfer of proteins into and across the cell membrane, serving as an ATP-driven molecular motor driving the stepwise translocation of polypeptide chains across the membrane. The polypeptide is Protein translocase subunit SecA (Finegoldia magna (strain ATCC 29328 / DSM 20472 / WAL 2508) (Peptostreptococcus magnus)).